A 327-amino-acid polypeptide reads, in one-letter code: ATP-dependent 6-phosphofructokinase (327 aa).

Residue glycine 12 participates in ATP binding. Residues 22–26 (RGVVR) and 55–60 (RYSVSD) contribute to the ADP site. Residues 73 to 74 (RF) and 103 to 106 (GDGS) each bind ATP. Aspartate 104 contacts Mg(2+). 127 to 129 (TID) serves as a coordination point for substrate. Aspartate 129 acts as the Proton acceptor in catalysis. Arginine 156 is an ADP binding site. Residues arginine 164 and 171-173 (MGR) contribute to the substrate site. ADP-binding positions include 187-189 (GCE), lysine 213, and 215-217 (KKH). Substrate-binding positions include glutamate 224, arginine 245, and 251–254 (HIQR).

It belongs to the phosphofructokinase type A (PFKA) family. ATP-dependent PFK group I subfamily. Prokaryotic clade 'B1' sub-subfamily. As to quaternary structure, homotetramer. Requires Mg(2+) as cofactor.

Its subcellular location is the cytoplasm. It catalyses the reaction beta-D-fructose 6-phosphate + ATP = beta-D-fructose 1,6-bisphosphate + ADP + H(+). It participates in carbohydrate degradation; glycolysis; D-glyceraldehyde 3-phosphate and glycerone phosphate from D-glucose: step 3/4. With respect to regulation, allosterically activated by ADP and other diphosphonucleosides, and allosterically inhibited by phosphoenolpyruvate. Its function is as follows. Catalyzes the phosphorylation of D-fructose 6-phosphate to fructose 1,6-bisphosphate by ATP, the first committing step of glycolysis. This chain is ATP-dependent 6-phosphofructokinase, found in Yersinia pseudotuberculosis serotype IB (strain PB1/+).